Consider the following 201-residue polypeptide: NADH-quinone oxidoreductase subunit I (201 aa).

4Fe-4S ferredoxin-type domains lie at 78 to 107 (MSYEKAKSRCVACYMCQTACPMPTLFRIEA) and 116 to 147 (KVVRFDMNLLNCLFCGLCVDACPVGCLTMTDI). Positions 87, 90, 93, 97, 127, 130, 133, and 137 each coordinate [4Fe-4S] cluster.

Belongs to the complex I 23 kDa subunit family. As to quaternary structure, NDH-1 is composed of 14 different subunits. Subunits NuoA, H, J, K, L, M, N constitute the membrane sector of the complex. [4Fe-4S] cluster serves as cofactor.

The protein localises to the cell inner membrane. The catalysed reaction is a quinone + NADH + 5 H(+)(in) = a quinol + NAD(+) + 4 H(+)(out). In terms of biological role, NDH-1 shuttles electrons from NADH, via FMN and iron-sulfur (Fe-S) centers, to quinones in the respiratory chain. The immediate electron acceptor for the enzyme in this species is believed to be ubiquinone. Couples the redox reaction to proton translocation (for every two electrons transferred, four hydrogen ions are translocated across the cytoplasmic membrane), and thus conserves the redox energy in a proton gradient. This is NADH-quinone oxidoreductase subunit I from Aquifex aeolicus (strain VF5).